Here is a 362-residue protein sequence, read N- to C-terminus: Homeobox protein Nkx-2.3 (362 aa).

Disordered regions lie at residues 126–149 and 203–222; these read EAAGDCKTSEDGERPKPRSRRKPR and QRQDKSLELGTHAPPPPPRR. Over residues 132–141 the composition is skewed to basic and acidic residues; that stretch reads KTSEDGERPK. The segment at residues 145-204 is a DNA-binding region (homeobox); it reads RRKPRVLFSQAQVFELERRFKQQRYLSAPEREHLASSLKLTSTQVKIWFQNRRYKCKRQR.

Belongs to the NK-2 homeobox family. In terms of tissue distribution, expressed in spleen and intestine. Also expressed in salivary gland and tongue.

Its subcellular location is the nucleus. Transcriptional regulator essential for normal development and functions of the small intestine and spleen. Activates directly MADCAM1 expression. Required for homing of lymphocytes in spleen and mucosa-associated lymphoid tissue. May have a role during pharyngeal organogenesis. The sequence is that of Homeobox protein Nkx-2.3 (Nkx2-3) from Mus musculus (Mouse).